A 116-amino-acid chain; its full sequence is Endocuticle structural glycoprotein SgAbd-4 (116 aa).

A Pyrrolidone carboxylic acid modification is found at Gln1. Residues 20 to 92 enclose the Chitin-binding type R&amp;R domain; sequence DGSYQWNYET…PQGAHFPTPP (73 aa). Residues Thr90 and Thr107 are each glycosylated (O-linked (HexNAc...) threonine). A glycan (O-linked (HexNAc...) serine) is linked at Ser110. Thr111 is a glycosylation site (O-linked (HexNAc...) threonine). Pro116 carries the proline amide modification.

Its function is as follows. Component of the abdominal endocuticle. This chain is Endocuticle structural glycoprotein SgAbd-4, found in Schistocerca gregaria (Desert locust).